Reading from the N-terminus, the 591-residue chain is Probable methyltransferase PMT6 (591 aa).

Residues 1 to 13 are Cytoplasmic-facing; the sequence is MRGSVIGAERSGQ. The chain crosses the membrane as a helical; Signal-anchor for type II membrane protein span at residues 14–34; it reads TIMVALVLMVGSFYTGSLFGT. Residues 35–591 lie on the Lumenal side of the membrane; the sequence is NQPIYVSHPS…FCRKRFWAII (557 aa). N-linked (GlcNAc...) asparagine glycans are attached at residues asparagine 87, asparagine 99, asparagine 146, asparagine 193, asparagine 323, asparagine 436, asparagine 473, and asparagine 515.

The protein belongs to the methyltransferase superfamily.

Its subcellular location is the endoplasmic reticulum membrane. This chain is Probable methyltransferase PMT6, found in Arabidopsis thaliana (Mouse-ear cress).